A 216-amino-acid chain; its full sequence is Somatotropin (216 aa).

The signal sequence occupies residues 1–26 (MAAGPRTSVLLAFTLLCLPWPQEAGA). His-45 contributes to the Zn(2+) binding site. Cys-78 and Cys-189 are oxidised to a cystine. A Phosphoserine modification is found at Ser-131. Glu-198 provides a ligand contact to Zn(2+). A disulfide bridge links Cys-206 with Cys-214.

It belongs to the somatotropin/prolactin family.

It is found in the secreted. In terms of biological role, plays an important role in growth control. Its major role in stimulating body growth is to stimulate the liver and other tissues to secrete IGF1. It stimulates both the differentiation and proliferation of myoblasts. It also stimulates amino acid uptake and protein synthesis in muscle and other tissues. The sequence is that of Somatotropin (GH1) from Camelus dromedarius (Dromedary).